Reading from the N-terminus, the 281-residue chain is MSAQESCLSLIKYFLFVFNLFFFVLGGLIFCFGTWILIDKTSFVSFVGLSFVPLQTWSKVLAVSGVLTMALALLGCVGALKELRCLLGLYFGMLLLLFATQITLGILISTQRVRLERRVQELVLRTIQSYRTNPDETAAEESWDYAQFQLRCCGWQSPRDWNKAQMLKANESEEPFVPCSCYNSTATNDSTVFDKLFFSQLSRLGPRAKLRQTADICALPAKAHIYREGCAQSLQKWLHNNIISIVGICLGVGLLELGFMTLSIFLCRNLDHVYDRLARYR.

Over 1–17 (MSAQESCLSLIKYFLFV) the chain is Cytoplasmic. The helical transmembrane segment at 18–38 (FNLFFFVLGGLIFCFGTWILI) threads the bilayer. The Extracellular segment spans residues 39 to 59 (DKTSFVSFVGLSFVPLQTWSK). Residues 60 to 74 (VLAVSGVLTMALALL) traverse the membrane as a helical segment. Over 75–85 (GCVGALKELRC) the chain is Cytoplasmic. The chain crosses the membrane as a helical span at residues 86–111 (LLGLYFGMLLLLFATQITLGILISTQ). Residues 112–241 (RVRLERRVQE…QSLQKWLHNN (130 aa)) lie on the Extracellular side of the membrane. N-linked (GlcNAc...) asparagine glycosylation is found at Asn-170, Asn-183, and Asn-188. Residues 242-266 (IISIVGICLGVGLLELGFMTLSIFL) form a helical membrane-spanning segment. Residues 267–281 (CRNLDHVYDRLARYR) are Cytoplasmic-facing.

Belongs to the tetraspanin (TM4SF) family. As to quaternary structure, interacts with SCIMP. Interacts with SOCS3. Interacts with DECTIN1/CLEC7A. Tyrosine phosphorylated; leading to activation of downstream signaling pathways.

The protein localises to the cell membrane. Structural component of specialized membrane microdomains known as tetraspanin-enriched microdomains (TERMs), which act as platforms for receptor clustering and signaling. Participates thereby in diverse biological functions such as cell signal transduction, adhesion, migration and protein trafficking. Upon ligand binding, two signaling pathways are activated, one acting through phosphorylation by LYN leading to cell death or a survival pathway with activation of GSK3B. Plays an essential role for clustering of integrin ITGA4/ITGB1 and promotes its mobility in the plasma membrane of B-cells. In turn, participates in ITGA4/ITGB1 integrin-mediated antiapoptotic signaling through AKT. Also plays a role in the migration of dendritic cells and neutrophils to draining lymph nodes, as well as in their integrin-mediated adhesion. Negatively regulates IL-6 responses through direct interaction with SOCS3 thereby preventing constitutive IL-6 signaling. Alternatively, inhibition of IL-6 signaling can also occur via interaction and stabilization of DECTIN1/CLEC7A at the cell membrane to inhibit its ability to promote the production of IL-6. The chain is Leukocyte antigen CD37 (Cd37) from Mus musculus (Mouse).